Reading from the N-terminus, the 122-residue chain is Large ribosomal subunit protein uL14 (122 aa).

This sequence belongs to the universal ribosomal protein uL14 family. Part of the 50S ribosomal subunit. Forms a cluster with proteins L3 and L19. In the 70S ribosome, L14 and L19 interact and together make contacts with the 16S rRNA in bridges B5 and B8.

Its function is as follows. Binds to 23S rRNA. Forms part of two intersubunit bridges in the 70S ribosome. The polypeptide is Large ribosomal subunit protein uL14 (Stenotrophomonas maltophilia (strain R551-3)).